A 285-amino-acid chain; its full sequence is Probable fructose-bisphosphate aldolase (285 aa).

Serine 50 provides a ligand contact to D-glyceraldehyde 3-phosphate. Aspartate 85 acts as the Proton donor in catalysis. Residues histidine 86, aspartate 107, glutamate 137, and histidine 181 each contribute to the Zn(2+) site. Dihydroxyacetone phosphate is bound at residue glycine 182. Histidine 209 contributes to the Zn(2+) binding site. Dihydroxyacetone phosphate contacts are provided by residues 210-212 (GGT) and 231-234 (NVNT). A phosphothreonine mark is found at threonine 212 and threonine 234.

It belongs to the class II fructose-bisphosphate aldolase family. Zn(2+) is required as a cofactor. Post-translationally, phosphorylated during sporulation.

It carries out the reaction beta-D-fructose 1,6-bisphosphate = D-glyceraldehyde 3-phosphate + dihydroxyacetone phosphate. It participates in carbohydrate degradation; glycolysis; D-glyceraldehyde 3-phosphate and glycerone phosphate from D-glucose: step 4/4. Functionally, catalyzes the aldol condensation of dihydroxyacetone phosphate (DHAP or glycerone-phosphate) with glyceraldehyde 3-phosphate (G3P) to form fructose 1,6-bisphosphate (FBP) in gluconeogenesis and the reverse reaction in glycolysis. The chain is Probable fructose-bisphosphate aldolase (fbaA) from Bacillus subtilis (strain 168).